A 356-amino-acid polypeptide reads, in one-letter code: Tricetin 3',4',5'-O-trimethyltransferase (356 aa).

Residue 123–129 coordinates substrate; that stretch reads MNQDKVL. The substrate binding stretch occupies residues 155–173; sequence AFEYHGTDPRFNRVFNEGM. 5 residues coordinate S-adenosyl-L-methionine: G201, D224, D244, M245, and K258. H262 (proton acceptor) is an active-site residue.

Belongs to the class I-like SAM-binding methyltransferase superfamily. Cation-independent O-methyltransferase family. COMT subfamily. Homodimer. The monomer is fully active and dimerization is not required for sequential methylation. In terms of tissue distribution, expressed in roots, stems and leaves.

The enzyme catalyses tricetin + 3 S-adenosyl-L-methionine = 3',4',5'-O-trimethyltricetin + 3 S-adenosyl-L-homocysteine + 3 H(+). Functionally, flavonoid B-ring-specific O-methyltransferase with a preference for flavones &gt; dihydroflavones &gt; flavonols that possess at least two B-ring hydroxyl groups. Active with tricetin, 5-hydroxyferulic acid, luteolin, quercitin, eriodictyol, quercetagetin, taxifolin, gossypetin and myricetin. No activity with naringenin, apigenin, kaempferol, 7,8-dihydroxy- or 5,7,8-trihydroxy flavones, chlorogenic acid, gallic acid or daphnetin. Catalyzes the sequential O-methylation of tricetin via 3'-O-methyltricetin, 3',5'-O-methyltricetin to 3',4',5'-O-trimethyltricetin. May also be involved in S lignin biosynthesis. This Triticum aestivum (Wheat) protein is Tricetin 3',4',5'-O-trimethyltransferase (OMT2).